The primary structure comprises 102 residues: Protein E7 (102 aa).

Residues 1-44 (MIGKEVTVQDIVLELSEVQPEVLPVDLFCEEELPNEDTEEELDT) are E7 terminal domain. The short motif at 27-31 (LFCEE) is the LXCXE motif; interaction with host RB1 and TMEM173/STING element. The segment at 55 to 93 (CGCSHCEVKLRVFVQATEFGIRAFQQLLTGDLQLLCPEC) is a zinc-finger region. The Nuclear export signal signature appears at 75-83 (IRAFQQLLT).

The protein belongs to the papillomaviridae E7 protein family. As to quaternary structure, homodimer. Homooligomer. Interacts with host RB1; this interaction induces dissociation of RB1-E2F1 complex thereby disrupting RB1 activity. Interacts with host EP300; this interaction represses EP300 transcriptional activity. Interacts with protein E2; this interaction inhibits E7 oncogenic activity. Interacts with host TMEM173/STING; this interaction impairs the ability of TMEM173/STING to sense cytosolic DNA and promote the production of type I interferon (IFN-alpha and IFN-beta). Highly phosphorylated.

The protein localises to the host cytoplasm. Its subcellular location is the host nucleus. In terms of biological role, plays a role in viral genome replication by driving entry of quiescent cells into the cell cycle. Stimulation of progression from G1 to S phase allows the virus to efficiently use the cellular DNA replicating machinery to achieve viral genome replication. E7 protein has both transforming and trans-activating activities. Induces the disassembly of the E2F1 transcription factor from RB1, with subsequent transcriptional activation of E2F1-regulated S-phase genes. Interferes with host histone deacetylation mediated by HDAC1 and HDAC2, leading to transcription activation. Also plays a role in the inhibition of both antiviral and antiproliferative functions of host interferon alpha. Interaction with host TMEM173/STING impairs the ability of TMEM173/STING to sense cytosolic DNA and promote the production of type I interferon (IFN-alpha and IFN-beta). This is Protein E7 from Human papillomavirus 36.